The following is a 209-amino-acid chain: Large ribosomal subunit protein bL25 (209 aa).

It belongs to the bacterial ribosomal protein bL25 family. CTC subfamily. As to quaternary structure, part of the 50S ribosomal subunit; part of the 5S rRNA/L5/L18/L25 subcomplex. Contacts the 5S rRNA. Binds to the 5S rRNA independently of L5 and L18.

This is one of the proteins that binds to the 5S RNA in the ribosome where it forms part of the central protuberance. This chain is Large ribosomal subunit protein bL25, found in Xanthomonas campestris pv. campestris (strain B100).